The chain runs to 274 residues: MLEAKLNNASILKKLFECIKDLVNDANVDADESGLKLQALDGNHVSLVSLHLLDSGFSHYRCDRERVLGVNIASLNKVFKLCGANESVVISSKDDEDNLNFVFENNKEDKVTNFSLKLMSIELDSLNIPDCEEGFDAEVELSSKELTNIFRNLSEFSDTVFIEIDSNCIKFTTKGIVGDAEVALKPRDSTSEDDIGVTIKSKKKIKQSFAIKYLNLFSKSNILADVVVLGLSDSRPIEFKYEIKDTSPDSDTLKIGFVKFFLAPKMDDDMDNKD.

A DNA-binding region spans residues 61 to 80; the sequence is RCDRERVLGVNIASLNKVFK.

This sequence belongs to the PCNA family. Homotrimer. Interacts with ORC1 (via PIP-box motif); the interaction occurs during DNA replication in trophozoites. Interacts with ORC5; the interaction occurs during the trophozoite stage but not at the late schizont stage. Interacts with FEN1.

It is found in the nucleus. Its subcellular location is the chromosome. The protein resides in the cytoplasm. Auxiliary protein of DNA polymerase delta and is involved in the control of DNA replication by increasing the polymerase processibility during elongation of the leading strand. Involved in DNA damage response. This Plasmodium falciparum (isolate 3D7) protein is Proliferating cell nuclear antigen 1.